The sequence spans 447 residues: Argininosuccinate synthase (447 aa).

ATP is bound by residues 17–25 (AFSGGLDTS) and Ala-43. L-citrulline is bound at residue Tyr-99. ATP contacts are provided by Gly-129 and Thr-131. The L-aspartate site is built by Thr-131, Asn-135, and Asp-136. Residue Asn-135 participates in L-citrulline binding. Asp-136 serves as a coordination point for ATP. L-citrulline contacts are provided by Arg-139 and Ser-192. Asp-194 contributes to the ATP binding site. Thr-201, Glu-203, and Glu-280 together coordinate L-citrulline.

The protein belongs to the argininosuccinate synthase family. Type 2 subfamily. Homotetramer.

It localises to the cytoplasm. The enzyme catalyses L-citrulline + L-aspartate + ATP = 2-(N(omega)-L-arginino)succinate + AMP + diphosphate + H(+). It participates in amino-acid biosynthesis; L-arginine biosynthesis; L-arginine from L-ornithine and carbamoyl phosphate: step 2/3. This chain is Argininosuccinate synthase, found in Escherichia coli (strain K12 / MC4100 / BW2952).